Consider the following 472-residue polypeptide: Ras-GEF domain-containing family member 1B (472 aa).

An N-terminal Ras-GEF domain is found at 34–164 (HDNNLLSGSL…MIQCLIRKLA (131 aa)). Residues 204–452 (DPYTLAQQLT…YLASYESEGP (249 aa)) form the Ras-GEF domain.

Interacts with CCDC124 during cytokinesis. Interacts with Ras family proteins.

The protein resides in the early endosome. Its subcellular location is the late endosome. It is found in the midbody. Guanine nucleotide exchange factor (GEF) with specificity for RAP2A, it doesn't seems to activate other Ras family proteins (in vitro). In Bos taurus (Bovine), this protein is Ras-GEF domain-containing family member 1B (RASGEF1B).